A 117-amino-acid chain; its full sequence is NADH-ubiquinone oxidoreductase chain 3 (117 aa).

A run of 3 helical transmembrane segments spans residues 6-26 (ILILLIISGTLSILILGASYI), 58-78 (FFLIGILFLIFDLEISFLFPW), and 85-105 (LPLFGYWVVMLFLFILTLGLI).

The protein belongs to the complex I subunit 3 family.

It is found in the mitochondrion membrane. The enzyme catalyses a ubiquinone + NADH + 5 H(+)(in) = a ubiquinol + NAD(+) + 4 H(+)(out). Core subunit of the mitochondrial membrane respiratory chain NADH dehydrogenase (Complex I) that is believed to belong to the minimal assembly required for catalysis. Complex I functions in the transfer of electrons from NADH to the respiratory chain. The immediate electron acceptor for the enzyme is believed to be ubiquinone. The protein is NADH-ubiquinone oxidoreductase chain 3 (ND3) of Sarcophyton glaucum (Toadstool umbrella leather coral).